A 538-amino-acid polypeptide reads, in one-letter code: Putative cysteine ligase BshC (538 aa).

A coiled-coil region spans residues 462 to 533 (LDHLEKRLLK…DPLESNFKIL (72 aa)).

It belongs to the BshC family.

The protein is Putative cysteine ligase BshC of Christiangramia forsetii (strain DSM 17595 / CGMCC 1.15422 / KT0803) (Gramella forsetii).